The sequence spans 262 residues: Acyl-[acyl-carrier-protein]--UDP-N-acetylglucosamine O-acyltransferase (262 aa).

It belongs to the transferase hexapeptide repeat family. LpxA subfamily. Homotrimer.

Its subcellular location is the cytoplasm. It carries out the reaction a (3R)-hydroxyacyl-[ACP] + UDP-N-acetyl-alpha-D-glucosamine = a UDP-3-O-[(3R)-3-hydroxyacyl]-N-acetyl-alpha-D-glucosamine + holo-[ACP]. The protein operates within glycolipid biosynthesis; lipid IV(A) biosynthesis; lipid IV(A) from (3R)-3-hydroxytetradecanoyl-[acyl-carrier-protein] and UDP-N-acetyl-alpha-D-glucosamine: step 1/6. Functionally, involved in the biosynthesis of lipid A, a phosphorylated glycolipid that anchors the lipopolysaccharide to the outer membrane of the cell. This Vibrio cholerae serotype O1 (strain ATCC 39541 / Classical Ogawa 395 / O395) protein is Acyl-[acyl-carrier-protein]--UDP-N-acetylglucosamine O-acyltransferase.